We begin with the raw amino-acid sequence, 101 residues long: NAD(P)H-quinone oxidoreductase subunit 4L, chloroplastic (101 aa).

The next 3 helical transmembrane spans lie at 2 to 22 (ILEHVLVLSAYLFSIGIYGLI), 32 to 52 (MCLELILNAVNINFVTFSDFF), and 61 to 81 (IFSIFVIAIAAAEAAIGLAIV).

Belongs to the complex I subunit 4L family. As to quaternary structure, NDH is composed of at least 16 different subunits, 5 of which are encoded in the nucleus.

It localises to the plastid. Its subcellular location is the chloroplast thylakoid membrane. It catalyses the reaction a plastoquinone + NADH + (n+1) H(+)(in) = a plastoquinol + NAD(+) + n H(+)(out). The catalysed reaction is a plastoquinone + NADPH + (n+1) H(+)(in) = a plastoquinol + NADP(+) + n H(+)(out). Functionally, NDH shuttles electrons from NAD(P)H:plastoquinone, via FMN and iron-sulfur (Fe-S) centers, to quinones in the photosynthetic chain and possibly in a chloroplast respiratory chain. The immediate electron acceptor for the enzyme in this species is believed to be plastoquinone. Couples the redox reaction to proton translocation, and thus conserves the redox energy in a proton gradient. The protein is NAD(P)H-quinone oxidoreductase subunit 4L, chloroplastic of Nicotiana sylvestris (Wood tobacco).